Reading from the N-terminus, the 436-residue chain is UPF0229 protein Meso_0256 (436 aa).

The segment at 53-110 (PMPARGTSEPTFRPDRSSGERGYILPGNKEFAPGDRLPKPGASGGEGGTGAGRGGSDD) is disordered. Residues 94–106 (ASGGEGGTGAGRG) show a composition bias toward gly residues.

It belongs to the UPF0229 family.

The sequence is that of UPF0229 protein Meso_0256 from Chelativorans sp. (strain BNC1).